The following is a 166-amino-acid chain: Protein-export protein SecB (166 aa).

It belongs to the SecB family. In terms of assembly, homotetramer, a dimer of dimers. One homotetramer interacts with 1 SecA dimer.

The protein resides in the cytoplasm. Functionally, one of the proteins required for the normal export of preproteins out of the cell cytoplasm. It is a molecular chaperone that binds to a subset of precursor proteins, maintaining them in a translocation-competent state. It also specifically binds to its receptor SecA. This Actinobacillus succinogenes (strain ATCC 55618 / DSM 22257 / CCUG 43843 / 130Z) protein is Protein-export protein SecB.